A 418-amino-acid polypeptide reads, in one-letter code: uncharacterized protein (418 aa).

Over residues 282–297 (EEHSSIAKLDSEEKIR) the composition is skewed to basic and acidic residues. The interval 282–346 (EEHSSIAKLD…SASVDDVSEE (65 aa)) is disordered. A compositionally biased stretch (low complexity) spans 304-316 (SSTSLSPDPTSDN). A compositionally biased stretch (polar residues) spans 322–337 (WVSSQDTSKNSSNLAS).

This is an uncharacterized protein from Schizosaccharomyces pombe (strain 972 / ATCC 24843) (Fission yeast).